We begin with the raw amino-acid sequence, 311 residues long: Systemic RNA interference defective protein 2 (311 aa).

The first 20 residues, 1–20 (MPRFVYFCFALIALLPISWT), serve as a signal peptide directing secretion. Residues 21–188 (MDGILITDVE…EETKTVVNKN (168 aa)) lie on the Extracellular side of the membrane. Residues 189–209 (GGAVAVAVIEGIALIAILAFL) traverse the membrane as a helical segment. The Cytoplasmic segment spans residues 210–311 (GYRTMVNHKL…NDPFATLESW (102 aa)). The segment covering 287-301 (NSSAAQPSTTSNGQF) has biased composition (polar residues). Positions 287–311 (NSSAAQPSTTSNGQFNDPFATLESW) are disordered.

As to expression, expressed in the intestinal lumen. Also present, at lower levels, in the excretory duct cells.

It localises to the apical cell membrane. The protein localises to the cytoplasm. Plays a role in RNA-mediated gene silencing by mediating endocytic uptake of double-stranded RNA (dsRNA) ingested from the environment into intestinal cells from the intestinal lumen. Selective for dsRNAs of at least 50 bp. Required for avoidance behavior induced by small RNAs derived from pathogenic bacteria such as P.aeruginosa. This is Systemic RNA interference defective protein 2 from Caenorhabditis elegans.